Here is a 243-residue protein sequence, read N- to C-terminus: Vesicle-associated membrane protein-associated protein B (243 aa).

Alanine 2 is modified (N-acetylalanine). Residues 2–218 (AKVEQVLSLE…AALAATGKEE (217 aa)) are Cytoplasmic-facing. Positions 7–124 (VLSLEPQHEL…MDSKLRCVFE (118 aa)) constitute an MSP domain. Residue serine 146 is modified to Phosphoserine. Lysine 147 participates in a covalent cross-link: Glycyl lysine isopeptide (Lys-Gly) (interchain with G-Cter in SUMO1). Phosphoserine occurs at positions 156 and 159. A coiled-coil region spans residues 161–196 (LDDTEVKKVMEECRRLQGEVQRLREESRQLKEEDGL). The residue at position 206 (serine 206) is a Phosphoserine. Residues 219–239 (GLSARLLALVVLFFIVGVIIG) traverse the membrane as a helical; Anchor for type IV membrane protein segment.

It belongs to the VAMP-associated protein (VAP) (TC 9.B.17) family. Homodimer, and heterodimer with VAPA. Interacts with VAMP1 and VAMP2. Interacts (via MSP domain) with ZFYVE27. Interacts with RMDN3. Interacts with KIF5A in a ZFYVE27-dependent manner. Interacts (via MSP domain) with STARD3 (via phospho-FFAT motif). Interacts with STARD3NL (via FFAT motif). Interacts with CERT1. Interacts with PLEKHA3 and SACM1L to form a ternary complex. Interacts with VPS13A (via FFAT motif). Interacts with RB1CC1 (via phosphorylated FFAT motif), MIGA2 (via phosphorylated FFAT motif), RMDN3 (via phosphorylated FFAT motif), OSBPL1A (via FFAT motif), KCNB1 (via phosphorylated FFAT motif) and KCNB2 (via phosphorylated FFAT motif). Interacts (via MSP domain) with WDR44 (via FFAT motif); the interactions connect the endoplasmic reticulum (ER) with the endosomal tubule.

Its subcellular location is the endoplasmic reticulum membrane. Endoplasmic reticulum (ER)-anchored protein that mediates the formation of contact sites between the ER and endosomes via interaction with FFAT motif-containing proteins such as STARD3 or WDR44. Interacts with STARD3 in a FFAT motif phosphorylation dependent manner. Via interaction with WDR44 participates in neosynthesized protein export. Participates in the endoplasmic reticulum unfolded protein response (UPR) by inducing ERN1/IRE1 activity. Involved in cellular calcium homeostasis regulation. This is Vesicle-associated membrane protein-associated protein B from Mus musculus (Mouse).